We begin with the raw amino-acid sequence, 547 residues long: MFS-type transporter ungB (547 aa).

Transmembrane regions (helical) follow at residues 14–34 (LLVT…ETVL), 50–70 (DVGW…MAWG), 80–100 (WVFL…GVSP), 111–131 (IAGL…SNTI), 138–158 (IYLG…PVIG), 169–189 (WCFF…VFCL), 210–230 (LLGS…LEWG), 238–258 (SWRV…FAVV), 279–299 (LGLI…VYYL), 316–336 (LAIL…GILV), 343–363 (TPFL…LSSL), 366–386 (ASGL…IGLG), 392–412 (VVPS…TLCF), and 475–495 (AVSE…LGSA). Residues 503–547 (PGHKEATEKVEGEGQGQGQQQEQDQGQGWGEVGESHALAHPTADK) are disordered. Residues 504–514 (GHKEATEKVEG) show a composition bias toward basic and acidic residues.

This sequence belongs to the major facilitator superfamily. TCR/Tet family.

Its subcellular location is the membrane. Its function is as follows. MFS-type transporter; part of the gene cluster that mediates the biosynthesis of the unguisins, gamma-aminobutyric acid (GABA)-containing fungal cyclic heptapeptides with the amino acid sequence cyclo-(D-Ala1-D-Val2-L-Phe3-D-Val4-D-Ala5-D-Trp6-GABA7) for unguisin A and cyclo-(D-Ala1-D-Val2-L-Leu3-D-Val4-D-Ala5-D-Trp6-GABA7) for unguisin B. May be involved in the secretion of unguisins. In Aspergillus violaceofuscus (strain CBS 115571), this protein is MFS-type transporter ungB.